The following is a 137-amino-acid chain: ATP synthase epsilon chain (137 aa).

Belongs to the ATPase epsilon chain family. As to quaternary structure, F-type ATPases have 2 components, CF(1) - the catalytic core - and CF(0) - the membrane proton channel. CF(1) has five subunits: alpha(3), beta(3), gamma(1), delta(1), epsilon(1). CF(0) has three main subunits: a, b and c.

It localises to the cell membrane. Functionally, produces ATP from ADP in the presence of a proton gradient across the membrane. The protein is ATP synthase epsilon chain of Streptococcus agalactiae serotype III (strain NEM316).